The chain runs to 422 residues: Aminopentol aminotransferase (422 aa).

Residue lysine 258 is modified to N6-(pyridoxal phosphate)lysine.

The protein belongs to the class-III pyridoxal-phosphate-dependent aminotransferase family. Pyridoxal 5'-phosphate is required as a cofactor.

The protein localises to the cytoplasm. It catalyses the reaction (2S,3S,5R,10R,12S,14S,15R,16R)-2-amino-12,16-dimethylicosane-3,5,10,14,15-pentol + pyruvate = (3S,5R,10R,12S,14S,15R,16R)-3,5,10,14,15-pentahydroxy-12,16-dimethylicosan-2-one + L-alanine. In terms of biological role, involved in degradation of fumonisin B1. Catalyzes the deamination of aminopentol (HFB1) to 2-keto-HFB1. Pyruvate is the preferred cosubstrate, but it can also use several other alpha-keto acids as amino group acceptors. The protein is Aminopentol aminotransferase (fumI) of Sphingopyxis macrogoltabida (Sphingomonas macrogoltabidus).